Reading from the N-terminus, the 285-residue chain is MSYEPATAATVAGLSVSGVKTMRVALYQCPPRPLDVAGNLQRLHQVAMEATDADLLVLPEMFLSGYNIGLEAVGALAEAQDGPSAQRIAAIAQAAGTAILYGYPERSVDGQIYNAVQLIDAQGQRLCNYRKTHLFGDLDHSMFSAGEDDFPLVELDGWKLGFLICYDIEFPENARRLALAGAELILVPTANMIPYDFVADVTIRARAFENQCYVAYANYCGHEEQIRYCGQSSIAAPDGSRIALAGLDEALIIGTLDRQLMGESRALNRYLSDRRPELYDDLSKR.

The region spanning 22-258 (MRVALYQCPP…EALIIGTLDR (237 aa)) is the CN hydrolase domain. The Proton acceptor role is filled by Glu-60. Residue Lys-131 is the Proton donor of the active site. Residue Cys-165 is the Nucleophile of the active site.

Belongs to the carbon-nitrogen hydrolase superfamily. NIT1/NIT2 family.

In Pseudomonas protegens (strain DSM 19095 / LMG 27888 / CFBP 6595 / CHA0), this protein is Hydrolase in pqqF 5'region.